Reading from the N-terminus, the 390-residue chain is Aspartate beta-hydroxylase domain-containing protein 1 (390 aa).

The segment at 1–54 is disordered; that stretch reads MKEGRGSFSVERGPRKERETAQSGMWKGNSPAGSQGAAMEGTGGELGGQGNWGP. Topologically, residues 1-72 are cytoplasmic; that stretch reads MKEGRGSFSV…RASLIMLPWP (72 aa). Residues 41 to 51 show a composition bias toward gly residues; it reads GTGGELGGQGN. The chain crosses the membrane as a helical span at residues 73-95; the sequence is LPLASSALTLLFGALTSLFLWYC. Over 96 to 390 the chain is Lumenal; sequence YRLGSQDMQA…ALDFVFAPDP (295 aa). The disordered stretch occupies residues 116–143; the sequence is RGGPVGCSEAGGPSPGGPGDPGEGPRTE. Residues 128 to 137 are compositionally biased toward gly residues; it reads PSPGGPGDPG. S129 carries the post-translational modification Phosphoserine.

This sequence belongs to the aspartyl/asparaginyl beta-hydroxylase family.

It localises to the membrane. The chain is Aspartate beta-hydroxylase domain-containing protein 1 (ASPHD1) from Homo sapiens (Human).